We begin with the raw amino-acid sequence, 284 residues long: Ubiquinone biosynthesis protein COQ4, mitochondrial (284 aa).

Residues H165, D166, H169, and E181 each coordinate Zn(2+).

It belongs to the COQ4 family. Component of a multi-subunit COQ enzyme complex, composed of at least COQ3, COQ4, COQ5, COQ6, COQ7 and COQ9. It depends on Zn(2+) as a cofactor.

It localises to the mitochondrion inner membrane. It carries out the reaction a 4-hydroxy-3-methoxy-5-(all-trans-polyprenyl)benzoate + H(+) = a 2-methoxy-6-(all-trans-polyprenyl)phenol + CO2. It participates in cofactor biosynthesis; ubiquinone biosynthesis. In terms of biological role, lyase that catalyzes the C1-decarboxylation of 4-hydroxy-3-methoxy-5-(all-trans-polyprenyl)benzoic acid into 2-methoxy-6-(all-trans-polyprenyl)phenol during ubiquinone biosynthesis. This Ajellomyces dermatitidis (strain ER-3 / ATCC MYA-2586) (Blastomyces dermatitidis) protein is Ubiquinone biosynthesis protein COQ4, mitochondrial.